A 640-amino-acid chain; its full sequence is Serine/threonine-protein kinase WNG1 (640 aa).

An N-terminal signal peptide occupies residues 1–70 (MPEQDLASGF…GVLCTVEAGA (70 aa)). 2 disordered regions span residues 100–222 (PEVT…AQPT) and 237–280 (SHPD…DASN). Residues 104-120 (HASSEGSPQFESSLSQQ) are compositionally biased toward polar residues. Over residues 124–141 (RPADRGEAHNGEEPRKDA) the composition is skewed to basic and acidic residues. Low complexity predominate over residues 175–186 (QRQASSAAESLA). Positions 248–279 (FSKKQEGRRERRLAVRGDDSFARGHNRDRDAS) are enriched in basic and acidic residues. A Protein kinase domain is found at 291-593 (WAKIAALATG…LKQVMEDPYF (303 aa)). Position 395 (K395) interacts with ATP. D486 functions as the Proton acceptor in the catalytic mechanism. Residues 609–640 (PFRGDFSIDDPDAGGKMYIPPSKEQDHEQENE) form a disordered region. Positions 631-640 (KEQDHEQENE) are enriched in basic and acidic residues.

It belongs to the protein kinase superfamily. STE Ser/Thr protein kinase family. WNG subfamily. Requires Mg(2+) as cofactor.

It localises to the cytoplasmic granule. The protein resides in the secreted. The protein localises to the parasitophorous vacuole lumen. The catalysed reaction is L-seryl-[protein] + ATP = O-phospho-L-seryl-[protein] + ADP + H(+). It catalyses the reaction L-threonyl-[protein] + ATP = O-phospho-L-threonyl-[protein] + ADP + H(+). Functionally, serine/threonine-protein kinase which, at the tachyzoite stage, phosphorylates several parasitophorous vacuole (PV)-resident proteins such as GRA2, GRA6 and GRA7. By phosphorylating GRA2 and GRA6, regulates the formation of a functional intravacuolar network (IVN); IVN is composed of membranous tubules that bud from the PV membrane into the vacuolar lumen. Plays a role in the establishement of chronic infection in the host by controlling cyst formation in the host tissues. This is Serine/threonine-protein kinase WNG1 from Toxoplasma gondii.